The sequence spans 246 residues: U2 small nuclear ribonucleoprotein A' (246 aa).

LRR repeat units follow at residues 19–40 (RDRE…GVTR), 42–63 (QNDA…PLLQ), 64–85 (QLKT…IGHS), and 88–109 (ALHS…VHLS). In terms of domain architecture, LRRCT spans 122 to 160 (TPASREAQYREFVIWKLPQVRVLDYQRIKDKERARAKDL).

It belongs to the U2 small nuclear ribonucleoprotein A family. Associated with the spliceosome.

The protein localises to the nucleus. Functionally, involved in pre-mRNA splicing. The protein is U2 small nuclear ribonucleoprotein A' (LEA1) of Mycosarcoma maydis (Corn smut fungus).